A 516-amino-acid polypeptide reads, in one-letter code: Facilitated glucose transporter homolog (516 aa).

The tract at residues 1–37 (MNAVVASQNKNDRSFSNMESESSSNVEKSEKENHHQS) is disordered. At 1–47 (MNAVVASQNKNDRSFSNMESESSSNVEKSEKENHHQSLPDENWTPFL) the chain is on the cytoplasmic side. Positions 14–26 (SFSNMESESSSNV) are enriched in low complexity. Over residues 27-37 (EKSEKENHHQS) the composition is skewed to basic and acidic residues. The chain crosses the membrane as a helical span at residues 48 to 68 (FFCISSIALASFQDGFQIGCI). The Extracellular portion of the chain corresponds to 69 to 101 (NAPGPLIIDWIKKCHFELFGEVLSQYQADFIWS). The helical transmembrane segment at 102–122 (VAVSMFSVGGMFGSFCSGFLA) threads the bilayer. Residues 123-138 (DKFGRKSTLLYNNILA) lie on the Cytoplasmic side of the membrane. The chain crosses the membrane as a helical span at residues 139 to 159 (LLAAVCLSTSKLFNFYPMIVF). The Extracellular portion of the chain corresponds to 160–161 (GR). Residues 162 to 182 (FLVGLNCGITSGLVPMFLTEL) traverse the membrane as a helical segment. At 183-200 (APANLRGKCGSFHQLNIS) the chain is on the cytoplasmic side. A helical transmembrane segment spans residues 201–221 (VAIVLSQALGLPQIFGTQVGW). A topological domain (extracellular) is located at residue Pro222. A helical transmembrane segment spans residues 223-243 (YIFACVAIPTFLQLATIPFCV). At 244–306 (ESPKYLISKL…SLFKGDNQWP (63 aa)) the chain is on the cytoplasmic side. Residues 307–327 (MIVSILMMFSQQFSGISAVTF) form a helical membrane-spanning segment. At 328–344 (YSTLIFKRNGLSGNEPM) the chain is on the extracellular side. The chain crosses the membrane as a helical span at residues 345–365 (YATVGFGCIKLIATFGCLFLI). Residues 366–376 (DHPKFGRKRLH) are Cytoplasmic-facing. The helical transmembrane segment at 377–397 (IAGLSGMCISSILIVITLTLS) threads the bilayer. Topologically, residues 398–409 (NAGYHWASYMNV) are extracellular. The chain crosses the membrane as a helical span at residues 410–430 (LFILSFVVTFAFGPGPIPWFF). Topologically, residues 431–444 (TSELFDSATRGRAA) are cytoplasmic. The chain crosses the membrane as a helical span at residues 445–465 (AVSATSNWVANWMVGLTFLPI). Topologically, residues 466–471 (NNIIHQ) are extracellular. Residues 472 to 492 (YAFLMFTFFTFTFAIFTWKFV) form a helical membrane-spanning segment. Residues 493-516 (PETKGKSPSAIRKELAFMRKRICS) lie on the Cytoplasmic side of the membrane.

It belongs to the major facilitator superfamily. Sugar transporter (TC 2.A.1.1) family. As to expression, expressed in seam cells from the early embryonic stage through the L2 stage (at protein level).

It localises to the cell membrane. In terms of biological role, appears to have no transport activity for glucose. The chain is Facilitated glucose transporter homolog from Caenorhabditis elegans.